Consider the following 56-residue polypeptide: Large ribosomal subunit protein bL32 (56 aa).

The disordered stretch occupies residues 1–21 (MGVPQRRQSHARKNKRRSEWR). A compositionally biased stretch (basic residues) spans 7-19 (RQSHARKNKRRSE).

It belongs to the bacterial ribosomal protein bL32 family.

This chain is Large ribosomal subunit protein bL32, found in Syntrophomonas wolfei subsp. wolfei (strain DSM 2245B / Goettingen).